A 508-amino-acid chain; its full sequence is MSRIVFICLAAILTDALTWAQVNVEPNTALLNEGDRTELLCRYGRSINYCRIEIPGEQKVLNLSPEWSKTPGFTYFGAGLTAGQCGVSIERVKASNNGQVKCSLGVEGEELSGTIDLVVALRPQQPIIELLSRPNREGYFNEGTEFRARCSVRDGRPPANISWYIDNMPANKRTTPLEVMSSTNDNVELSTSVQEIQWHLSPEDSNRKLVCRSHHQTDRESVPPQEAAYIINVRYAPVHQPDAAVYGLYLEHTAIVNITIRASPQPKIEWTIDGAIVGQGRTDGRYSAYEPQYLGNDEYNVTLAIAGLTLEDTTKIYNLRASNELGLTDYQVRISSSSKPPSSSLDVAAIVGIVVAVAVLVLVVLLIVFARATGRWCFGGKSIKTPTNETSDTESADIKATSTATATTTMGGVGVSAEEEETVNEQESPQEQQQQQQKKAKRLPAFAAAILRRFNEKDSRKYKDNQESLNIVEGSVQEIPATNNAIDGNDNEPKAIVWQSTSPVWTFK.

An N-terminal signal peptide occupies residues 1 to 20; sequence MSRIVFICLAAILTDALTWA. The residue at position 21 (Q21) is a Pyrrolidone carboxylic acid. At 21-346 the chain is on the extracellular side; the sequence is QVNVEPNTAL…SSKPPSSSLD (326 aa). An Ig-like V-type domain is found at 44–106; the sequence is GRSINYCRIE…NGQVKCSLGV (63 aa). Ig-like C2-type domains follow at residues 126–223 and 236–310; these read PIIE…ESVP and APVH…GLTL. The cysteines at positions 150 and 211 are disulfide-linked. Residues N160, N257, and N300 are each glycosylated (N-linked (GlcNAc...) asparagine). The chain crosses the membrane as a helical span at residues 347–370; that stretch reads VAAIVGIVVAVAVLVLVVLLIVFA. The Cytoplasmic portion of the chain corresponds to 371–508; that stretch reads RATGRWCFGG…QSTSPVWTFK (138 aa). The interval 381–439 is disordered; that stretch reads KSIKTPTNETSDTESADIKATSTATATTTMGGVGVSAEEEETVNEQESPQEQQQQQQKK. The residue at position 382 (S382) is a Phosphoserine. Composition is skewed to low complexity over residues 400-409 and 425-437; these read ATSTATATTT and EQESPQEQQQQQQ. S459 bears the Phosphoserine mark.

As to expression, expressed on different subsets of axon bundles (fascicles) in insect embryos.

It localises to the membrane. In terms of biological role, mediates cell adhesion in a Ca(2+)-independent manner. It plays a role in axon outgrowth, guidance and fasciculation of the developing nervous system. Function in neurons is essential for adult survival, and is important for climbing behavior and activity. This is Fasciclin-3 (Fas3) from Drosophila melanogaster (Fruit fly).